The chain runs to 549 residues: Beta-mannosyltransferase 3 (549 aa).

Residues 1–37 (MFESDLSFYSALLILCCPISIVFFKKFPIKGYTGANK) lie on the Cytoplasmic side of the membrane. The chain crosses the membrane as a helical span at residues 38–58 (VSLFLQCLIAILNLNILYSFI). Residues 59-549 (NSLTITLGHD…DTMGWDKLSR (491 aa)) are Extracellular-facing.

It belongs to the BMT family.

The protein localises to the membrane. Beta-mannosyltransferase involved in cell wall biosynthesis. Required for addition of the second beta-mannose residue to acid-stable fraction of cell wall phosphopeptidomannan, and in elongation of beta-mannose chains on the phosphopeptidomannan acid-labile fraction. The sequence is that of Beta-mannosyltransferase 3 (BMT3) from Candida albicans (strain SC5314 / ATCC MYA-2876) (Yeast).